Reading from the N-terminus, the 389-residue chain is Chalcone synthase 1 (389 aa).

Cysteine 164 is an active-site residue.

The protein belongs to the thiolase-like superfamily. Chalcone/stilbene synthases family.

The catalysed reaction is (E)-4-coumaroyl-CoA + 3 malonyl-CoA + 3 H(+) = 2',4,4',6'-tetrahydroxychalcone + 3 CO2 + 4 CoA. It participates in secondary metabolite biosynthesis; flavonoid biosynthesis. Its function is as follows. The primary product of this enzyme is 4,2',4',6'-tetrahydroxychalcone (also termed naringenin-chalcone or chalcone) which can under specific conditions spontaneously isomerize into naringenin. The sequence is that of Chalcone synthase 1 (CHS1) from Pisum sativum (Garden pea).